The primary structure comprises 117 residues: Large ribosomal subunit protein eL30B (117 aa).

A compositionally biased stretch (low complexity) spans Met-1–Ser-14. The disordered stretch occupies residues Met-1–Asp-22.

This sequence belongs to the eukaryotic ribosomal protein eL30 family. As to quaternary structure, component of the large ribosomal subunit (LSU). Mature yeast ribosomes consist of a small (40S) and a large (60S) subunit. The 40S small subunit contains 1 molecule of ribosomal RNA (18S rRNA) and at least 33 different proteins. The large 60S subunit contains 3 rRNA molecules (25S, 5.8S and 5S rRNA) and at least 46 different proteins.

The protein localises to the cytoplasm. Component of the ribosome, a large ribonucleoprotein complex responsible for the synthesis of proteins in the cell. The small ribosomal subunit (SSU) binds messenger RNAs (mRNAs) and translates the encoded message by selecting cognate aminoacyl-transfer RNA (tRNA) molecules. The large subunit (LSU) contains the ribosomal catalytic site termed the peptidyl transferase center (PTC), which catalyzes the formation of peptide bonds, thereby polymerizing the amino acids delivered by tRNAs into a polypeptide chain. The nascent polypeptides leave the ribosome through a tunnel in the LSU and interact with protein factors that function in enzymatic processing, targeting, and the membrane insertion of nascent chains at the exit of the ribosomal tunnel. The chain is Large ribosomal subunit protein eL30B (rpl3002) from Schizosaccharomyces pombe (strain 972 / ATCC 24843) (Fission yeast).